An 842-amino-acid polypeptide reads, in one-letter code: Valine--tRNA ligase (842 aa).

The 'HIGH' region signature appears at 86–96 (PFTSGELHMGH). A 'KMSKS' region motif is present at residues 572–576 (RMSKS). K575 provides a ligand contact to ATP.

The protein belongs to the class-I aminoacyl-tRNA synthetase family. ValS type 2 subfamily.

It is found in the cytoplasm. The catalysed reaction is tRNA(Val) + L-valine + ATP = L-valyl-tRNA(Val) + AMP + diphosphate. Catalyzes the attachment of valine to tRNA(Val). As ValRS can inadvertently accommodate and process structurally similar amino acids such as threonine, to avoid such errors, it has a 'posttransfer' editing activity that hydrolyzes mischarged Thr-tRNA(Val) in a tRNA-dependent manner. In Saccharolobus solfataricus (strain ATCC 35092 / DSM 1617 / JCM 11322 / P2) (Sulfolobus solfataricus), this protein is Valine--tRNA ligase.